The chain runs to 137 residues: Small ribosomal subunit protein uS11A (137 aa).

Ser-2 carries the N-acetylserine modification. The tract at residues 117-137 is disordered; that stretch reads DVTPVPSDSTRKKGGRRGRRL. A compositionally biased stretch (basic residues) spans 128–137; sequence KKGGRRGRRL.

This sequence belongs to the universal ribosomal protein uS11 family. In terms of assembly, component of the small ribosomal subunit (SSU). Mature yeast ribosomes consist of a small (40S) and a large (60S) subunit. The 40S small subunit contains 1 molecule of ribosomal RNA (18S rRNA) and 33 different proteins (encoded by 57 genes). The large 60S subunit contains 3 rRNA molecules (25S, 5.8S and 5S rRNA) and 46 different proteins (encoded by 81 genes). uS11 interacts with eS1 forming part of the mRNA exit tunnel. uS11 interacts with snoRNA U3. uS11 interacts with MPP10. Component of the ribosomal small subunit (SSU) processome composed of at least 40 protein subunits and snoRNA U3. In terms of processing, N-terminally acetylated by acetyltransferase NatA.

Its subcellular location is the cytoplasm. It localises to the nucleus. The protein localises to the nucleolus. In terms of biological role, component of the ribosome, a large ribonucleoprotein complex responsible for the synthesis of proteins in the cell. The small ribosomal subunit (SSU) binds messenger RNAs (mRNAs) and translates the encoded message by selecting cognate aminoacyl-transfer RNA (tRNA) molecules. The large subunit (LSU) contains the ribosomal catalytic site termed the peptidyl transferase center (PTC), which catalyzes the formation of peptide bonds, thereby polymerizing the amino acids delivered by tRNAs into a polypeptide chain. The nascent polypeptides leave the ribosome through a tunnel in the LSU and interact with protein factors that function in enzymatic processing, targeting, and the membrane insertion of nascent chains at the exit of the ribosomal tunnel. uS11 is involved in nucleolar processing of pre-18S ribosomal RNA and ribosome assembly. The protein is Small ribosomal subunit protein uS11A of Saccharomyces cerevisiae (strain ATCC 204508 / S288c) (Baker's yeast).